A 78-amino-acid chain; its full sequence is UPF0291 protein Ldb1355 (78 aa).

The protein belongs to the UPF0291 family.

Its subcellular location is the cytoplasm. The polypeptide is UPF0291 protein Ldb1355 (Lactobacillus delbrueckii subsp. bulgaricus (strain ATCC 11842 / DSM 20081 / BCRC 10696 / JCM 1002 / NBRC 13953 / NCIMB 11778 / NCTC 12712 / WDCM 00102 / Lb 14)).